A 178-amino-acid polypeptide reads, in one-letter code: Protein GrpE (178 aa).

The disordered stretch occupies residues 1 to 22 (MSENQNPSPSPEEIEAAMSANA).

The protein belongs to the GrpE family. In terms of assembly, homodimer.

The protein localises to the cytoplasm. Its function is as follows. Participates actively in the response to hyperosmotic and heat shock by preventing the aggregation of stress-denatured proteins, in association with DnaK and GrpE. It is the nucleotide exchange factor for DnaK and may function as a thermosensor. Unfolded proteins bind initially to DnaJ; upon interaction with the DnaJ-bound protein, DnaK hydrolyzes its bound ATP, resulting in the formation of a stable complex. GrpE releases ADP from DnaK; ATP binding to DnaK triggers the release of the substrate protein, thus completing the reaction cycle. Several rounds of ATP-dependent interactions between DnaJ, DnaK and GrpE are required for fully efficient folding. The sequence is that of Protein GrpE from Acidovorax ebreus (strain TPSY) (Diaphorobacter sp. (strain TPSY)).